The sequence spans 577 residues: Acyl-coenzyme A synthetase ACSM2B, mitochondrial (577 aa).

The transit peptide at 1-46 directs the protein to the mitochondrion; that stretch reads MHWLRKVQGLCTLWGTQMSSRTLYINSRQLVSLQWGHQEVPAKFNF. CoA is bound at residue glutamine 139. ATP is bound by residues 221 to 229, 359 to 364, aspartate 446, and arginine 461; these read TSGTSGLPK and EFYGQT. Threonine 364 contacts substrate. 469–471 contacts CoA; it reads SGY. Arginine 472 is a substrate binding site. Arginine 501 lines the CoA pocket. At serine 513 the chain carries Phosphoserine. CoA contacts are provided by residues lysine 532 and 540-542; that span reads YPR. Lysine 557 serves as a coordination point for ATP.

The protein belongs to the ATP-dependent AMP-binding enzyme family. In terms of assembly, monomer. The cofactor is Mg(2+). Requires Mn(2+) as cofactor. Detected in liver.

It is found in the mitochondrion. It carries out the reaction a medium-chain fatty acid + ATP + CoA = a medium-chain fatty acyl-CoA + AMP + diphosphate. The enzyme catalyses benzoate + ATP + CoA = benzoyl-CoA + AMP + diphosphate. It catalyses the reaction hexanoate + ATP + CoA = hexanoyl-CoA + AMP + diphosphate. The catalysed reaction is butanoate + ATP + CoA = butanoyl-CoA + AMP + diphosphate. It carries out the reaction octanoate + ATP + CoA = octanoyl-CoA + AMP + diphosphate. The enzyme catalyses decanoate + ATP + CoA = decanoyl-CoA + AMP + diphosphate. Activated by monovalent cations, such as potassium, rubidium or ammonium. In terms of biological role, catalyzes the activation of fatty acids by CoA to produce an acyl-CoA, the first step in fatty acid metabolism. Capable of activating medium-chain fatty acids (e.g. butyric (C4) to decanoic (C10) acids), and certain carboxylate-containing xenobiotics, e.g. benzoate. The sequence is that of Acyl-coenzyme A synthetase ACSM2B, mitochondrial (ACSM2B) from Homo sapiens (Human).